Here is a 431-residue protein sequence, read N- to C-terminus: Chaperone SurA (431 aa).

An N-terminal signal peptide occupies residues 1–20; it reads MKNWRTLILGLALSASTAFA. PpiC domains lie at 171–272 and 282–382; these read NDEL…KVND and VTET…QLLD.

The protein resides in the periplasm. The enzyme catalyses [protein]-peptidylproline (omega=180) = [protein]-peptidylproline (omega=0). Its function is as follows. Chaperone involved in the correct folding and assembly of outer membrane proteins. Recognizes specific patterns of aromatic residues and the orientation of their side chains, which are found more frequently in integral outer membrane proteins. May act in both early periplasmic and late outer membrane-associated steps of protein maturation. The sequence is that of Chaperone SurA from Pectobacterium atrosepticum (strain SCRI 1043 / ATCC BAA-672) (Erwinia carotovora subsp. atroseptica).